Reading from the N-terminus, the 398-residue chain is FK506-binding protein 4 (398 aa).

Disordered stretches follow at residues Glu-66–Glu-120, Val-164–Lys-232, and Asp-245–Lys-288. The segment covering Glu-170–Glu-228 has biased composition (acidic residues). Positions Pro-264 to Asn-287 are enriched in basic and acidic residues. A PPIase FKBP-type domain is found at Gly-312–Lys-398.

This sequence belongs to the FKBP-type PPIase family. FKBP3/4 subfamily. Binds to histones H3 and H4.

It localises to the nucleus. The enzyme catalyses [protein]-peptidylproline (omega=180) = [protein]-peptidylproline (omega=0). Inhibited by both FK506 and rapamycin. Functionally, PPIase that acts as a histone chaperone. Histone proline isomerase that increases the rate of cis-trans isomerization at prolines on the histone H3 N-terminal tail. Proline isomerization influences H3 methylation thereby regulating gene expression. The sequence is that of FK506-binding protein 4 (FPR4) from Candida glabrata (strain ATCC 2001 / BCRC 20586 / JCM 3761 / NBRC 0622 / NRRL Y-65 / CBS 138) (Yeast).